The primary structure comprises 568 residues: MIPQQQPSGMPFHRYQPFKPVDLPDRTWPSKTITKAPRWLSTDLRDGNQALIEPMDTERKREIFDLLVRMGYKEIEVGFPAASQTDYDFVRYLIEEDRIPDDVQISVLTQAREELIERTVQSLVGAKRATVHLYNATSPEFRRIVFGVNREECKGIAVEGTRTVLKFAEQYLKDTEYFGYEYSPEIFIDTELEFALEVCEAVMDVYQPGPDREIILNLPATVERATPNVYADQIEWMSRNLSRREYVCLSVHPHNDRGTAVAAAELAVMAGADRVEGCLFGHGERTGNVCLVTLGLNLFSQGIDPMIDFSNIDEIRRTVEHCTQLPVNPRHPYGGDLVYTAFSGSHQDAIKKGFHALEADAAAAGVPVDEYRWNMPYLPIDPKDVGRTYEAVIRVNSQSGKGGVSYVLQRDYSIDLPRRLQIEFSRVVQQFADAEGGEFSGERIWEIFTDTYLSEGVVGVMAYRSETSEDGEYCISADVRLRGEIREITGTGNGPISAFVDALAGVGFKLRVLDYSEHALSEGGDARAAAYVEAEVDGNVLWGVGISSNITTASLKAVCSAVNRAQQS.

Residues 37-313 enclose the Pyruvate carboxyltransferase domain; the sequence is PRWLSTDLRD…DPMIDFSNID (277 aa). Mg(2+) contacts are provided by aspartate 46, histidine 252, histidine 254, and asparagine 288. Residues 455–568 form a regulatory domain region; it reads EGVVGVMAYR…CSAVNRAQQS (114 aa).

It belongs to the alpha-IPM synthase/homocitrate synthase family. LeuA type 2 subfamily. In terms of assembly, homodimer. It depends on Mg(2+) as a cofactor.

It is found in the cytoplasm. It catalyses the reaction 3-methyl-2-oxobutanoate + acetyl-CoA + H2O = (2S)-2-isopropylmalate + CoA + H(+). The protein operates within amino-acid biosynthesis; L-leucine biosynthesis; L-leucine from 3-methyl-2-oxobutanoate: step 1/4. Its function is as follows. Catalyzes the condensation of the acetyl group of acetyl-CoA with 3-methyl-2-oxobutanoate (2-ketoisovalerate) to form 3-carboxy-3-hydroxy-4-methylpentanoate (2-isopropylmalate). The sequence is that of 2-isopropylmalate synthase from Thermobifida fusca (strain YX).